Here is a 186-residue protein sequence, read N- to C-terminus: Ribosome-recycling factor (186 aa).

Belongs to the RRF family.

Its subcellular location is the cytoplasm. In terms of biological role, responsible for the release of ribosomes from messenger RNA at the termination of protein biosynthesis. May increase the efficiency of translation by recycling ribosomes from one round of translation to another. In Burkholderia lata (strain ATCC 17760 / DSM 23089 / LMG 22485 / NCIMB 9086 / R18194 / 383), this protein is Ribosome-recycling factor.